The primary structure comprises 1313 residues: MSRSSGASFAQFFPAAPRAARDRATERERARMRAQASPPTQPLDTNGHRTPLSSFTSNRSDDGASPGRSHITSLNHSSSAGADATRPPLEDTESLPGDTLNTVGSASSHTSTSSSIFSSSTRQPAMASASVRNSHTHNSTTPLTTAGSPSSLYLSTSLHAKPHSVSPHHADKQNGLTPTLNGSATDSLVPLPDGTERVPPRDPSRSVLCTICTYDPLLDKKLSSSEKKKAKPIYKDYGLNDEDDAPPSDPRLAHGGKLSYINVNFHLPKAQLIDAPSNLKPYPYDPKTSCGPGPPVQILVRGFNPLIAFTKVTTIFASFGDIAESSNKMHPETGSYLGFATIRYKDSKPTSSRPVPVPAHQAARRAVRGMHGRRIEANQVRVEFDPEGRKSKALMEAVLKKSRETSQTPNAAYKIPTGPKPRAGEVIPGPPPTAPKGPAAHRALGGSEAGWTSTKPRHPNIIETEPIVNHIKSEPYIFVAHEYVPVMPTTVAHMKKRLKQYGFDDIRADRTGYYIIFRDSHYGRDEASKCYNSANDTAFFTYSMVMDLHLFGTVGKSSRSSEDHRRHSYGSEKRPPPEHRQRDDQDRRRRDEEADIEEEKKQRAKNLDPVKEAAEVIRREMTEHLLKTIRTKITLPAVFDYLNPVNHAAKRRKLNIDDSHSGTIPSIVFDDSEGRSSPVGTPNSRADPIERRTARADVSTLRVRKLKSRGVNARKHGFNDPFARARPTQRVDLRSLHHRLNSDSDDDSDDGVDNRYSMIRDTEEPESRPRSRVSSEEDRNKEETGSWVAGEDDSMTEASFALNDTSALLKKRKLDLPAETAVKRQKKAEELFEATIARIETELPSQEQAVESVTPTGVEAPLNGLPDADVKAEPAEDKETEDSRLPTPIPDNTKPKKKAKAKKKSKKQIFEEREALKKQQQETFEREALRAAGIEDIEGTPDAEAKSQVGEPEPVPEPELETKGEALEAPETESKPDLDPELYPSEVVDALVLPKDFNLDIGTLKLVPFHGEDGPDAQRLQRKFGTAKLDCDAELWLWRRNRIRQLNSEDGSVDKPVGIGGYYVPNPTGCARTEGVKKILNSEKSKYLPHHIKVKKAREEREKNAKNGNTNSVAAAAEAARLAADSLVAKGNSRANRVNNRRYVAEINDQRKNFGQDSDVLRFNQLKKRKKPVKFARSAIHNWGLYAMENINKDDMIIEYVGEEVRQQIAELREARYLKSGIGSSYLFRIDDNTVIDATKKGGIARFINHSCMPNCTAKIIKVEGSKRIVIYALRDIAQNEELTYDYKFEREIGSTDRIPCLCGTAACKGFLN.

6 disordered regions span residues 1-205, 400-458, 555-607, 667-792, 842-908, and 932-982; these read MSRS…DPSR, KKSR…KPRH, GKSS…AKNL, IVFD…AGED, ELPS…SKKQ, and AGIE…DPEL. Positions 7 to 18 are enriched in low complexity; it reads ASFAQFFPAAPR. The segment covering 19 to 31 has biased composition (basic and acidic residues); sequence AARDRATERERAR. Positions 70–80 are enriched in polar residues; that stretch reads HITSLNHSSSA. Low complexity predominate over residues 105 to 121; that stretch reads SASSHTSTSSSIFSSST. Composition is skewed to polar residues over residues 130–158 and 174–186; these read SVRN…STSL and NGLT…SATD. A compositionally biased stretch (basic and acidic residues) spans 194–204; sequence GTERVPPRDPS. Positions 559–607 are enriched in basic and acidic residues; sequence RSSEDHRRHSYGSEKRPPPEHRQRDDQDRRRRDEEADIEEEKKQRAKNL. The segment covering 702-716 has biased composition (basic residues); the sequence is RVRKLKSRGVNARKH. The span at 758–784 shows a compositional bias: basic and acidic residues; that stretch reads MIRDTEEPESRPRSRVSSEEDRNKEET. A compositionally biased stretch (polar residues) spans 843 to 855; that stretch reads LPSQEQAVESVTP. The segment covering 868–884 has biased composition (basic and acidic residues); sequence ADVKAEPAEDKETEDSR. Residues 895 to 907 show a composition bias toward basic residues; it reads PKKKAKAKKKSKK. A compositionally biased stretch (basic and acidic residues) spans 960-978; sequence LETKGEALEAPETESKPDL. The RxxxRR motif signature appears at 1137 to 1142; sequence RVNNRR. Positions 1171 to 1288 constitute an SET domain; the sequence is KPVKFARSAI…QNEELTYDYK (118 aa). Y1287 serves as a coordination point for S-adenosyl-L-methionine. One can recognise a Post-SET domain in the interval 1297–1313; sequence DRIPCLCGTAACKGFLN.

It belongs to the class V-like SAM-binding methyltransferase superfamily. As to quaternary structure, component of the Set1C/COMPASS complex.

It localises to the nucleus. The protein resides in the chromosome. The catalysed reaction is L-lysyl(4)-[histone H3] + 3 S-adenosyl-L-methionine = N(6),N(6),N(6)-trimethyl-L-lysyl(4)-[histone H3] + 3 S-adenosyl-L-homocysteine + 3 H(+). It carries out the reaction N(6)-methyl-L-lysyl(4)-[histone H3] + S-adenosyl-L-methionine = N(6),N(6)-dimethyl-L-lysyl(4)-[histone H3] + S-adenosyl-L-homocysteine + H(+). It catalyses the reaction N(6),N(6)-dimethyl-L-lysyl(4)-[histone H3] + S-adenosyl-L-methionine = N(6),N(6),N(6)-trimethyl-L-lysyl(4)-[histone H3] + S-adenosyl-L-homocysteine + H(+). Functionally, catalytic component of the COMPASS (Set1C) complex that specifically mono-, di- and trimethylates histone H3 to form H3K4me1/2/3. Binds RNAs which might negatively affect its histone methyltransferase activity. COMPASS recognizes ubiquitinated H2B on one face of the nucleosome which stimulates the methylation of H3 on the opposing face. The chain is Histone-lysine N-methyltransferase, H3 lysine-4 specific (set-1) from Neurospora crassa (strain ATCC 24698 / 74-OR23-1A / CBS 708.71 / DSM 1257 / FGSC 987).